Reading from the N-terminus, the 181-residue chain is Probable pyruvoyl-dependent arginine decarboxylase (181 aa).

Ser43 is modified (pyruvic acid (Ser)).

Belongs to the PdaD family. Pyruvate is required as a cofactor.

It carries out the reaction L-arginine + H(+) = agmatine + CO2. This chain is Probable pyruvoyl-dependent arginine decarboxylase, found in Chlorobium luteolum (strain DSM 273 / BCRC 81028 / 2530) (Pelodictyon luteolum).